The primary structure comprises 188 residues: M-phase phosphoprotein 6 homolog (188 aa).

Residues 93 to 188 (EENVDEKDVS…NKNKKKKKRN (96 aa)) form a disordered region. Basic and acidic residues predominate over residues 120–149 (LTERERRKQELVSKKAEASRKMEVKAPAKE). Ser-167 carries the phosphoserine modification. Positions 174–188 (RKTKKNKNKKKKKRN) are enriched in basic residues.

Belongs to the MPP6 family. As to quaternary structure, associates with the RNA exosome complex.

The protein localises to the nucleus. Functionally, RNA-binding protein that associates with the RNA exosome complex. The sequence is that of M-phase phosphoprotein 6 homolog from Schizosaccharomyces pombe (strain 972 / ATCC 24843) (Fission yeast).